Consider the following 182-residue polypeptide: Peptidyl-prolyl cis-trans isomerase H (182 aa).

In terms of domain architecture, PPIase cyclophilin-type spans 15-181 (FFDITLGGEP…LDVVIAQCGE (167 aa)).

The protein belongs to the cyclophilin-type PPIase family. PPIase H subfamily.

It is found in the nucleus. The enzyme catalyses [protein]-peptidylproline (omega=180) = [protein]-peptidylproline (omega=0). Functionally, PPIases accelerate the folding of proteins. It catalyzes the cis-trans isomerization of proline imidic peptide bonds in oligopeptides. This is Peptidyl-prolyl cis-trans isomerase H (cyp-3) from Neurospora crassa (strain ATCC 24698 / 74-OR23-1A / CBS 708.71 / DSM 1257 / FGSC 987).